We begin with the raw amino-acid sequence, 300 residues long: F-box associated domain-containing protein sdz-33 (300 aa).

The F-box domain occupies 5–51; it reads PFPILCLPDFVLQKSLKLMGVVEHLCLSILSKNIKQLIATLKGYPKC.

Expressed in D-type motor neuron cell bodies.

Substrate recognition component of E3 ubiquitin-protein ligase complex which mediates the ubiquitination and subsequent proteasomal degradation of target proteins such as mdl-1. Positively regulates axon regeneration by targeting mdl-1 for ubiquitin-mediated degradation; probably thereby reducing levels of mdl-1-mxl-1 heterodimers, allowing free mxl-1 to form complexes with tdpt-1 and thus inhibiting tdpt-1-dependent sumoylation of ets-4. This chain is F-box associated domain-containing protein sdz-33, found in Caenorhabditis elegans.